Here is a 75-residue protein sequence, read N- to C-terminus: Small ribosomal subunit protein bS18 (75 aa).

This sequence belongs to the bacterial ribosomal protein bS18 family. In terms of assembly, part of the 30S ribosomal subunit. Forms a tight heterodimer with protein bS6.

Binds as a heterodimer with protein bS6 to the central domain of the 16S rRNA, where it helps stabilize the platform of the 30S subunit. The sequence is that of Small ribosomal subunit protein bS18 from Colwellia psychrerythraea (strain 34H / ATCC BAA-681) (Vibrio psychroerythus).